Here is a 523-residue protein sequence, read N- to C-terminus: Metalloendopeptidase OMA1, mitochondrial (523 aa).

The transit peptide at Met1–His45 directs the protein to the mitochondrion. Residues Ile46–Gln143 constitute a propeptide that is removed on maturation. Residues Ala144–Leu195 lie on the Mitochondrial matrix side of the membrane. Residues Pro148–Arg167 are cardiolipin-binding. The tract at residues Val165–Leu195 is stress-sensor region. Residues Phe196 to Val216 form a helical membrane-spanning segment. Residue His327 participates in Zn(2+) binding. Glu328 is a catalytic residue. Positions 331 and 392 each coordinate Zn(2+). A disulfide bridge links Cys407 with Cys465.

The protein belongs to the peptidase M48 family. Homooligomer. It depends on Zn(2+) as a cofactor. Post-translationally, autocatalytically cleaved in response to mitochondrial depolarization both at the N-terminus and C-terminus to generate the short active form (S-OMA1). Autocatalytic processing at the C-terminus takes place at residues 447-456. The S-OMA1 form is unstable. OMA1 pre-processing by AFG3L2 may participate in maturation before OMA1 autocatalytic cleavage. Degraded by YMEL1 in response to membrane depolarization. Protein turnover is regulated by prohibitin (PHB and PHB2), which promotes degradation of OMA1 in a cardiolipin-binding manner. In terms of processing, may form a redox-dependent disulfide bond. Exists in a semi-oxidized state and is activated by prolonged hypoxia.

The protein resides in the mitochondrion inner membrane. Protease activity is activated upon autocatalytic cleavage in response to mitochondrial depolarization. Metalloprotease that is part of the quality control system in the inner membrane of mitochondria. Activated in response to various mitochondrial stress, leading to the proteolytic cleavage of target proteins, such as OPA1, UQCC3 and DELE1. Involved in the fusion of the mitochondrial inner membranes by mediating cleavage of OPA1 at S1 position, generating the soluble OPA1 (S-OPA1), which cooperates with the membrane form (L-OPA1) to coordinate the fusion of mitochondrial inner membranes. Following stress conditions that induce loss of mitochondrial membrane potential, mediates cleavage of OPA1, leading to excess production of soluble OPA1 (S-OPA1) and negative regulation of mitochondrial fusion. Involved in mitochondrial safeguard in response to transient mitochondrial membrane depolarization (flickering) by catalyzing cleavage of OPA1, leading to excess production of S-OPA1, preventing mitochondrial hyperfusion. Also acts as a regulator of apoptosis: upon BAK and BAX aggregation, mediates cleavage of OPA1, leading to the remodeling of mitochondrial cristae and allowing the release of cytochrome c from mitochondrial cristae. In depolarized mitochondria, may also act as a backup protease for PINK1 by mediating PINK1 cleavage and promoting its subsequent degradation by the proteasome. May also cleave UQCC3 in response to mitochondrial depolarization. Also acts as an activator of the integrated stress response (ISR): in response to mitochondrial stress, mediates cleavage of DELE1 to generate the processed form of DELE1 (S-DELE1), which translocates to the cytosol and activates EIF2AK1/HRI to trigger the ISR. Its role in mitochondrial quality control is essential for regulating lipid metabolism as well as to maintain body temperature and energy expenditure under cold-stress conditions. Binds cardiolipin, possibly regulating its protein turnover. Required for the stability of the respiratory supercomplexes. This chain is Metalloendopeptidase OMA1, mitochondrial, found in Bos taurus (Bovine).